Here is a 427-residue protein sequence, read N- to C-terminus: Adenylosuccinate synthetase (427 aa).

GTP is bound by residues 12–18 (GDEGKGK) and 40–42 (GHT). D13 serves as the catalytic Proton acceptor. Mg(2+)-binding residues include D13 and G40. Residues 13–16 (DEGK), 38–41 (NAGH), T126, R140, Q221, T236, and R299 each bind IMP. H41 acts as the Proton donor in catalysis. Residue 295 to 301 (STTNRPR) coordinates substrate. GTP-binding positions include R301, 327 to 329 (KLD), and 409 to 411 (SLG).

Belongs to the adenylosuccinate synthetase family. In terms of assembly, homodimer. Mg(2+) serves as cofactor.

The protein resides in the cytoplasm. It carries out the reaction IMP + L-aspartate + GTP = N(6)-(1,2-dicarboxyethyl)-AMP + GDP + phosphate + 2 H(+). Its pathway is purine metabolism; AMP biosynthesis via de novo pathway; AMP from IMP: step 1/2. Plays an important role in the de novo pathway of purine nucleotide biosynthesis. Catalyzes the first committed step in the biosynthesis of AMP from IMP. The polypeptide is Adenylosuccinate synthetase (Borrelia turicatae (strain 91E135)).